The chain runs to 336 residues: Alcohol dehydrogenase (336 aa).

Zn(2+) is bound by residues cysteine 37, histidine 58, cysteine 89, cysteine 92, cysteine 95, cysteine 103, and cysteine 145.

It belongs to the zinc-containing alcohol dehydrogenase family. The cofactor is Zn(2+).

It catalyses the reaction a primary alcohol + NAD(+) = an aldehyde + NADH + H(+). The enzyme catalyses a secondary alcohol + NAD(+) = a ketone + NADH + H(+). This is Alcohol dehydrogenase (adh) from Staphylococcus aureus (strain Mu50 / ATCC 700699).